The following is a 295-amino-acid chain: 33 kDa chaperonin (295 aa).

Intrachain disulfides connect cysteine 237-cysteine 239 and cysteine 270-cysteine 273.

This sequence belongs to the HSP33 family. Post-translationally, under oxidizing conditions two disulfide bonds are formed involving the reactive cysteines. Under reducing conditions zinc is bound to the reactive cysteines and the protein is inactive.

It localises to the cytoplasm. Redox regulated molecular chaperone. Protects both thermally unfolding and oxidatively damaged proteins from irreversible aggregation. Plays an important role in the bacterial defense system toward oxidative stress. The sequence is that of 33 kDa chaperonin from Geobacillus sp. (strain WCH70).